A 99-amino-acid chain; its full sequence is Large ribosomal subunit protein uL23 (99 aa).

This sequence belongs to the universal ribosomal protein uL23 family. Part of the 50S ribosomal subunit. Contacts protein L29, and trigger factor when it is bound to the ribosome.

Its function is as follows. One of the early assembly proteins it binds 23S rRNA. One of the proteins that surrounds the polypeptide exit tunnel on the outside of the ribosome. Forms the main docking site for trigger factor binding to the ribosome. The protein is Large ribosomal subunit protein uL23 of Synechococcus sp. (strain JA-2-3B'a(2-13)) (Cyanobacteria bacterium Yellowstone B-Prime).